The chain runs to 200 residues: Ribonuclease T2 (200 aa).

Residues cysteine 17 and cysteine 22 are joined by a disulfide bond. Residue histidine 32 is part of the active site. Cysteine 42 and cysteine 89 are disulfide-bonded. N-linked (GlcNAc...) asparagine glycosylation is found at asparagine 43 and asparagine 73. Catalysis depends on residues glutamate 82 and histidine 86. The N-linked (GlcNAc...) asparagine glycan is linked to asparagine 116. Disulfide bonds link cysteine 152-cysteine 188 and cysteine 170-cysteine 180.

It belongs to the RNase T2 family.

It is found in the secreted. Its subcellular location is the lysosome lumen. The protein localises to the endoplasmic reticulum lumen. It localises to the mitochondrion intermembrane space. The enzyme catalyses a ribonucleotidyl-ribonucleotide-RNA + H2O = a 3'-end 3'-phospho-ribonucleotide-RNA + a 5'-end dephospho-ribonucleoside-RNA + H(+). It carries out the reaction an adenylyl-uridine-RNA = a 3'-end 2',3'-cyclophospho-AMP-RNA + a 5'-end dephospho-uridine-RNA. The catalysed reaction is a guanylyl-uridine-RNA = a 3'-end 2',3'-cyclophospho-GMP-RNA + a 5'-end dephospho-uridine-RNA. With respect to regulation, inhibited by Zn(2+) and Cu(2+). Its function is as follows. Ribonuclease that plays an essential role in innate immune response by recognizing and degrading RNAs from microbial pathogens that are subsequently sensed by TLR8. Cleaves preferentially single-stranded RNA molecules between purine and uridine residues, which critically contributes to the supply of catabolic uridine and the generation of purine-2',3'-cyclophosphate-terminated oligoribonucleotides. In turn, RNase T2 degradation products promote the RNA-dependent activation of TLR8. In plasmacytoid dendritic cells, it cooperates with PLD3 or PLD4 5'-&gt;3' exonucleases to process RNA fragments and release 2',3'-cyclic guanosine monophosphate (2',3'-cGMP), a potent stimulatory ligand for TLR7. Also plays a key role in degradation of mitochondrial RNA and processing of non-coding RNA imported from the cytosol into mitochondria. Participates as well in degradation of mitochondrion-associated cytosolic rRNAs. The chain is Ribonuclease T2 (RNASET2) from Sus scrofa (Pig).